The primary structure comprises 66 residues: U1-theraphotoxin-Cg1b (66 aa).

The N-terminal stretch at 1–21 (MKTSALFVIFGLVLLFCNSFA) is a signal peptide. A propeptide spanning residues 22 to 29 (AELKTTGR) is cleaved from the precursor. 3 disulfide bridges follow: Cys31/Cys46, Cys38/Cys51, and Cys45/Cys58.

It belongs to the neurotoxin 10 (Hwtx-1) family. 46 (Jztx-7/10/12) subfamily. In terms of tissue distribution, expressed by the venom gland.

The protein localises to the secreted. Functionally, probable ion channel inhibitor. This chain is U1-theraphotoxin-Cg1b, found in Chilobrachys guangxiensis (Chinese earth tiger tarantula).